A 218-amino-acid chain; its full sequence is MEPGFWHEKWQQQQIGFHQQDVNPFLVTYWHQLALPADAKIFVPLCGKSLDMCFLAEQGHQVIGCELNELAVQQFFSDNQLPMQQSAEGEHQHYQTEQISLYQGDIFTLPQSITAEVSGFYDRAALIAWPESMRAQYAKQLAYLLPQGSVGLLVTLDYPQEVLSGPPFAVSPTWVETHLSEDFEIQPLACQDVLADNPRFVKKAVPWLNEAVYLLKRR.

Positions 10, 45, 66, and 123 each coordinate S-adenosyl-L-methionine.

The protein belongs to the class I-like SAM-binding methyltransferase superfamily. TPMT family.

The protein resides in the cytoplasm. It catalyses the reaction S-adenosyl-L-methionine + a thiopurine = S-adenosyl-L-homocysteine + a thiopurine S-methylether.. The polypeptide is Thiopurine S-methyltransferase (Shewanella oneidensis (strain ATCC 700550 / JCM 31522 / CIP 106686 / LMG 19005 / NCIMB 14063 / MR-1)).